We begin with the raw amino-acid sequence, 175 residues long: Epididymal-specific lipocalin-8 (175 aa).

Positions 1 to 25 (MPGAAEALPTVTVTLVAGAVPPASG) are cleaved as a signal peptide. N66 and N74 each carry an N-linked (GlcNAc...) asparagine glycan. A disulfide bond links C79 and C166.

This sequence belongs to the calycin superfamily. Lipocalin family.

The protein localises to the secreted. In terms of biological role, may play a role in male fertility. May act as a retinoid carrier protein within the epididymis. The protein is Epididymal-specific lipocalin-8 (LCN8) of Homo sapiens (Human).